The chain runs to 701 residues: 2-isopropylmalate synthase (701 aa).

A disordered region spans residues 1–40; sequence MTTSESPDAYTESFGAHTIVKPAGPPRVGQPSWNPQRASS. Over residues 31-40 the composition is skewed to polar residues; sequence PSWNPQRASS. One can recognise a Pyruvate carboxyltransferase domain in the interval 72–346; it reads PLWCAVDLRD…DPQIDFSNID (275 aa). Mg(2+)-binding residues include D81, H285, H287, and N321. The segment at 491–701 is regulatory domain; that stretch reads PVRPLERIRQ…VVSAVNRAAR (211 aa). The VNTR1 repeat unit spans residues 575-593; the sequence is VTIASPAQPGEAGRHASDP. The tract at residues 581–670 is disordered; it reads AQPGEAGRHA…EAGRHASDPV (90 aa). The stretch at 594–612 is one VNTR2 repeat; sequence VTIASPAQPGEAGRHASDP. One copy of the VNTR3 repeat lies at 613–631; the sequence is VTIASPAQPGEAGRHASDP. A VNTR4 repeat occupies 632-650; that stretch reads VTIASPAQPGEAGRHASDP. One copy of the VNTR5 repeat lies at 651–669; it reads VTIASPAQPGEAGRHASDP.

This sequence belongs to the alpha-IPM synthase/homocitrate synthase family. LeuA type 2 subfamily. Homodimer. The cofactor is Mg(2+).

It localises to the cytoplasm. It catalyses the reaction 3-methyl-2-oxobutanoate + acetyl-CoA + H2O = (2S)-2-isopropylmalate + CoA + H(+). Its pathway is amino-acid biosynthesis; L-leucine biosynthesis; L-leucine from 3-methyl-2-oxobutanoate: step 1/4. In terms of biological role, catalyzes the condensation of the acetyl group of acetyl-CoA with 3-methyl-2-oxobutanoate (2-ketoisovalerate) to form 3-carboxy-3-hydroxy-4-methylpentanoate (2-isopropylmalate). The protein is 2-isopropylmalate synthase of Mycobacterium bovis (strain ATCC BAA-935 / AF2122/97).